Reading from the N-terminus, the 288-residue chain is Pyridoxal kinase PdxY (288 aa).

Residues serine 12 and 47 to 48 (TQ) each bind substrate. ATP contacts are provided by residues aspartate 114, glutamate 151, lysine 184, and 211–214 (RPLL). Aspartate 225 contributes to the substrate binding site.

The protein belongs to the pyridoxine kinase family. PdxY subfamily. In terms of assembly, homodimer. It depends on Mg(2+) as a cofactor.

It carries out the reaction pyridoxal + ATP = pyridoxal 5'-phosphate + ADP + H(+). Its pathway is cofactor metabolism; pyridoxal 5'-phosphate salvage; pyridoxal 5'-phosphate from pyridoxal: step 1/1. Its function is as follows. Pyridoxal kinase involved in the salvage pathway of pyridoxal 5'-phosphate (PLP). Catalyzes the phosphorylation of pyridoxal to PLP. The polypeptide is Pyridoxal kinase PdxY (Pseudomonas syringae pv. syringae (strain B728a)).